The primary structure comprises 64 residues: Large ribosomal subunit protein uL30 (64 aa).

It belongs to the universal ribosomal protein uL30 family. As to quaternary structure, part of the 50S ribosomal subunit.

The chain is Large ribosomal subunit protein uL30 from Methylorubrum populi (strain ATCC BAA-705 / NCIMB 13946 / BJ001) (Methylobacterium populi).